The sequence spans 153 residues: MGIEEIRRYLPHRYPFLLIDRIIALETQNYIHALKNVTANEPFFQGHFPNKAVMPGVLVVEAMAQAAGILGVKSAKAAAGLPDEPEEDGIYFFVGIDKARFRKTVVPGDQLILEVKLLRSRRGIWSFDARATVDDAVVCTAEIMCTSAGKGAA.

The active site involves H47.

It belongs to the thioester dehydratase family. FabZ subfamily.

Its subcellular location is the cytoplasm. It catalyses the reaction a (3R)-hydroxyacyl-[ACP] = a (2E)-enoyl-[ACP] + H2O. In terms of biological role, involved in unsaturated fatty acids biosynthesis. Catalyzes the dehydration of short chain beta-hydroxyacyl-ACPs and long chain saturated and unsaturated beta-hydroxyacyl-ACPs. This chain is 3-hydroxyacyl-[acyl-carrier-protein] dehydratase FabZ, found in Dichelobacter nodosus (strain VCS1703A).